Consider the following 165-residue polypeptide: Nucleotide-binding protein CHY_1197 (165 aa).

It belongs to the YajQ family.

In terms of biological role, nucleotide-binding protein. The polypeptide is Nucleotide-binding protein CHY_1197 (Carboxydothermus hydrogenoformans (strain ATCC BAA-161 / DSM 6008 / Z-2901)).